A 203-amino-acid chain; its full sequence is Ribosomal RNA small subunit methyltransferase G (203 aa).

Residues G75, L80, 126–127 (VE), and R141 contribute to the S-adenosyl-L-methionine site.

This sequence belongs to the methyltransferase superfamily. RNA methyltransferase RsmG family.

The protein resides in the cytoplasm. It catalyses the reaction guanosine(527) in 16S rRNA + S-adenosyl-L-methionine = N(7)-methylguanosine(527) in 16S rRNA + S-adenosyl-L-homocysteine. Its function is as follows. Specifically methylates the N7 position of guanine in position 527 of 16S rRNA. This is Ribosomal RNA small subunit methyltransferase G from Ruthia magnifica subsp. Calyptogena magnifica.